We begin with the raw amino-acid sequence, 330 residues long: Aspartate--ammonia ligase (330 aa).

It belongs to the class-II aminoacyl-tRNA synthetase family. AsnA subfamily.

The protein resides in the cytoplasm. The catalysed reaction is L-aspartate + NH4(+) + ATP = L-asparagine + AMP + diphosphate + H(+). It participates in amino-acid biosynthesis; L-asparagine biosynthesis; L-asparagine from L-aspartate (ammonia route): step 1/1. This is Aspartate--ammonia ligase from Streptococcus pyogenes serotype M1.